The chain runs to 1222 residues: MLFNINEKGEPLVISFAPFLSPEAIKHLQENERCSDQSQKRTAQQIEAIYTSGQNILVSASAGSGKTFVMVERILDKILRGVSIDRLFISTFTVKAATELRERIENKLYSQIAQTTDFQMKVYLTEQLQSLCQADIGTMDAFAQKVVSRYGYSIGISSQFRIMQDKAEQDVLKQEVFSKLFSEFMNQKEAPVFRALVKNFSGNCKDTSAFRELVYTCYSFSQSTENPKIWLQENFLSAAKTYQRLEDIPDHDIELLLLAMQDTANQLRDVTDMEDYGQLTKAGSRSAKYTKHLTIIEKLSDWVRDFKCLYGKAGLDRLIRDVTGLIPSGNDVTVSKVKYPVFKTLHQKLKQFRHLETILMYQKDCFPLLEQLQDFVLAFSEAYLAVKIQESAFEFSDIAHFAIKILEENTDIRQSYQQHYHEVMVDEYQDNNHMQERLLTLLSNGHNRFMVGDIKQSIYRFRQADPQIFNQKFRDYQKKTEQGKVILLKENFRSQSEVLNVSNAVFSHLMDESVGDVLYDEQHQLIAGSHAQTVPYLDRRAQLLLYNSDKDDGNAPSDSEGISFSEVTIVAKEIIKLHNDKGVPFEDITLLVSSRTRNDIISHTFNQYGIPIVTDGGQQNYLKSVEVMVMLDTLRTINNPRNDYALVALLRSPMFAFDEDDLARIALQKDNELDKDCLYDKIQRAVIGRGAYPELIHDTLLGKLNVFLKTLKSWRRYAKLGSLYDLILENFHERFYFDFVASQAKAEQAQANLYALALRANQFEKSGYKGLYRFIKMIDKVLETQNDLADVEVATPKQAVNLMTIHKSKGLQFPYVFILNCDKRFSMTDIHKSFILNRQHGIGIKYLADIKGLLGETTLNSVKVSMETLPYQLNKQELRLATLSEEMRLLYVAMTRAEKKVYFIGKASKSKSQEITDPKKLGKLLPLALREQLLTFQDWLLAIADIFSTEDLYFDVRFIEDSDLTQESVGRLQTPQLLNPDDLKDNRQSETIARALDMLEAVSQLNANYEAAIHLPTVRTPSQLKATYEPLLEPIGVDIIEKSSRSLSDFTLPHFSKKAKVEASHIGSALHQLMQVLPLSKPINQQTLLDALRGIDSNEEVKTALDLKKIESFFCDTSLGQFFQTYQKHLYREAPFAILKLDPISQEEYVLRGIIDAYFLFDDHIVLVDYKTDKYKQPIELKKRYQQQLELYAEALTQTYKLPVTKRYLVLMGGGKPEIVEV.

In terms of domain architecture, UvrD-like helicase ATP-binding spans Gln-39 to Gln-495. Ala-60–Thr-67 serves as a coordination point for ATP. Residues Gln-524–Gly-810 enclose the UvrD-like helicase C-terminal domain.

This sequence belongs to the helicase family. AddA subfamily. As to quaternary structure, heterodimer of AddA and AddB/RexB. It depends on Mg(2+) as a cofactor.

It catalyses the reaction Couples ATP hydrolysis with the unwinding of duplex DNA by translocating in the 3'-5' direction.. The enzyme catalyses ATP + H2O = ADP + phosphate + H(+). In terms of biological role, the heterodimer acts as both an ATP-dependent DNA helicase and an ATP-dependent, dual-direction single-stranded exonuclease. Recognizes the chi site generating a DNA molecule suitable for the initiation of homologous recombination. The AddA nuclease domain is required for chi fragment generation; this subunit has the helicase and 3' -&gt; 5' nuclease activities. This chain is ATP-dependent helicase/nuclease subunit A, found in Streptococcus pyogenes serotype M49 (strain NZ131).